The sequence spans 208 residues: Protein Nef (208 aa).

A lipid anchor (N-myristoyl glycine; by host) is attached at G2. S6 carries the phosphoserine; by host modification. An acidic; interacts with host PACS1 and PACS2; stabilizes the interaction of NEF/MHC-I with host AP1M1; necessary for MHC-I internalization region spans residues 64-67 (EEEE). An SH3-binding; interaction with Src family tyrosine kinases region spans residues 71-80 (PVKPQVPLRP). A PxxP; stabilizes the interaction of NEF/MHC-I with host AP1M1; necessary for MHC-I internalization motif is present at residues 74-77 (PQVP). The tract at residues 110–126 (DILDLWVYHTQGYFPDW) is mediates dimerization, Nef-PTE1 interaction. The interval 150 to 182 (VEPEKIEEANKGENNCLLHPMSQHGMDDPEREV) is binding to ATP6V1H. Positions 166 to 167 (LL) match the Dileucine internalization motif; necessary for CD4 internalization motif. The short motif at 176-177 (DD) is the Diacidic; necessary for CD4 internalization element.

This sequence belongs to the lentivirus primate group Nef protein family. As to quaternary structure, monomer; cytosolic form. Homodimer; membrane bound form. Interacts with Nef associated p21-activated kinase (PAK2); this interaction activates PAK2. Associates with the Nef-MHC-I-AP1 complex; this complex is required for MHC-I internalization. Interacts (via C-terminus) with host PI3-kinase. Interacts with host PACS1; this interaction seems to be weak. Interacts with host PACS2. Interacts with host LCK and MAPK3; these interactions inhibit the kinase activity of the latter. Interacts with host ATP6V1H; this interaction may play a role in CD4 endocytosis. Associates with the CD4-Nef-AP2 complex; this complex is required for CD4 internalization. Interacts with host AP2 subunit alpha and AP2 subunit sigma2. Interacts with TCR-zeta chain; this interaction up-regulates the Fas ligand (FasL) surface expression. Interacts with host HCK, LYN, and SRC; these interactions activate the Src family kinases. Interacts with MAP3K5; this interaction inhibits the Fas and TNFR-mediated death signals. Interacts with beta-COP and PTE1. Interacts with human RACK1; this increases Nef phosphorylation by PKC. Interacts with TP53; this interaction decreases the half-life of TP53, protecting the infected cell against p53-mediated apoptosis. In terms of processing, the virion-associated Nef proteins are cleaved by the viral protease to release the soluble C-terminal core protein. Nef is probably cleaved concomitantly with viral structural proteins on maturation of virus particles. Post-translationally, myristoylated. Phosphorylated on serine residues, probably by host PKCdelta and theta.

It localises to the host cell membrane. The protein localises to the virion. It is found in the secreted. Its subcellular location is the host Golgi apparatus membrane. Its function is as follows. Factor of infectivity and pathogenicity, required for optimal virus replication. Alters numerous pathways of T-lymphocyte function and down-regulates immunity surface molecules in order to evade host defense and increase viral infectivity. Alters the functionality of other immunity cells, like dendritic cells, monocytes/macrophages and NK cells. In infected CD4(+) T-lymphocytes, down-regulates the surface MHC-I, mature MHC-II, CD4, CD28, CCR5 and CXCR4 molecules. Mediates internalization and degradation of host CD4 through the interaction of with the cytoplasmic tail of CD4, the recruitment of AP-2 (clathrin adapter protein complex 2), internalization through clathrin coated pits, and subsequent transport to endosomes and lysosomes for degradation. Diverts host MHC-I molecules to the trans-Golgi network-associated endosomal compartments by an endocytic pathway to finally target them for degradation. MHC-I down-regulation may involve AP-1 (clathrin adapter protein complex 1) or possibly Src family kinase-ZAP70/Syk-PI3K cascade recruited by PACS2. In consequence infected cells are masked for immune recognition by cytotoxic T-lymphocytes. Decreasing the number of immune receptors also prevents reinfection by more HIV particles (superinfection). Down-regulates host SERINC3 and SERINC5 thereby excluding these proteins from the viral particles. Virion infectivity is drastically higher when SERINC3 or SERINC5 are excluded from the viral envelope, because these host antiviral proteins impair the membrane fusion event necessary for subsequent virion penetration. Functionally, bypasses host T-cell signaling by inducing a transcriptional program nearly identical to that of anti-CD3 cell activation. Interaction with TCR-zeta chain up-regulates the Fas ligand (FasL). Increasing surface FasL molecules and decreasing surface MHC-I molecules on infected CD4(+) cells send attacking cytotoxic CD8+ T-lymphocytes into apoptosis. In terms of biological role, plays a role in optimizing the host cell environment for viral replication without causing cell death by apoptosis. Protects the infected cells from apoptosis in order to keep them alive until the next virus generation is ready to strike. Inhibits the Fas and TNFR-mediated death signals by blocking MAP3K5/ASK1. Decreases the half-life of TP53, protecting the infected cell against p53-mediated apoptosis. Inhibits the apoptotic signals regulated by the Bcl-2 family proteins through the formation of a Nef/PI3-kinase/PAK2 complex that leads to activation of PAK2 and induces phosphorylation of host BAD. Its function is as follows. Extracellular Nef protein targets CD4(+) T-lymphocytes for apoptosis by interacting with CXCR4 surface receptors. The protein is Protein Nef of Human immunodeficiency virus type 1 group M subtype B (isolate MN) (HIV-1).